A 90-amino-acid polypeptide reads, in one-letter code: Aminoacyl carrier protein 1 (90 aa).

The region spanning 6–84 (TDVRNRIIKL…TLERMVMTQL (79 aa)) is the Carrier domain. S42 is subject to O-(pantetheine 4'-phosphoryl)serine.

4'-phosphopantetheine is transferred from CoA to a specific serine of the apo-form of this carrier protein.

Its function is as follows. Aminoacyl carrier protein. Can be charged with L-glycine via the formation of a thioester bond between the amino acid and the 4'-phosphopantetheinyl prosthetic group, catalyzed by the bll0957 ligase. The chain is Aminoacyl carrier protein 1 from Bradyrhizobium diazoefficiens (strain JCM 10833 / BCRC 13528 / IAM 13628 / NBRC 14792 / USDA 110).